Reading from the N-terminus, the 267-residue chain is Auxin-responsive protein IAA18 (267 aa).

Positions 42-46 (LELKL) match the EAR-like (transcriptional repression) motif. The segment at 81-101 (PSSTKTTSHKRTAPGPVVGWP) is disordered. Residues 149 to 248 (GMFVKINMYG…SVKRLRVIKT (100 aa)) enclose the PB1 domain.

Belongs to the Aux/IAA family. As to quaternary structure, homodimers and heterodimers. Interacts with TPL.

It is found in the nucleus. Functionally, aux/IAA proteins are short-lived transcriptional factors that function as repressors of early auxin response genes at low auxin concentrations. Repression is thought to result from the interaction with auxin response factors (ARFs), proteins that bind to the auxin-responsive promoter element (AuxRE). Formation of heterodimers with ARF proteins may alter their ability to modulate early auxin response genes expression. The chain is Auxin-responsive protein IAA18 (IAA18) from Arabidopsis thaliana (Mouse-ear cress).